Reading from the N-terminus, the 393-residue chain is Elongation factor Tu (393 aa).

Positions 6 to 204 (KPHINVGTIG…ALEKIELPMR (199 aa)) constitute a tr-type G domain. The G1 stretch occupies residues 15 to 22 (GHVDHGKT). 15–22 (GHVDHGKT) is a binding site for GTP. T22 provides a ligand contact to Mg(2+). Residues 58-62 (GITIS) are G2. The interval 79–82 (DCPG) is G3. Residues 79–83 (DCPGH) and 134–137 (NKCD) contribute to the GTP site. The tract at residues 134-137 (NKCD) is G4. The interval 172 to 174 (SAV) is G5.

Belongs to the TRAFAC class translation factor GTPase superfamily. Classic translation factor GTPase family. EF-Tu/EF-1A subfamily. In terms of assembly, monomer.

It localises to the cytoplasm. It catalyses the reaction GTP + H2O = GDP + phosphate + H(+). In terms of biological role, GTP hydrolase that promotes the GTP-dependent binding of aminoacyl-tRNA to the A-site of ribosomes during protein biosynthesis. The polypeptide is Elongation factor Tu (Anaplasma phagocytophilum (strain HZ)).